We begin with the raw amino-acid sequence, 184 residues long: UPF0397 protein SAS2570 (184 aa).

The next 5 membrane-spanning stretches (helical) occupy residues 11 to 31, 44 to 64, 77 to 97, 111 to 131, and 148 to 168; these read VVAI…VVIP, AFLA…TGLV, AWWS…WIGL, MIYF…LIAP, and QGVI…TILL.

Belongs to the UPF0397 family.

The protein localises to the cell membrane. The chain is UPF0397 protein SAS2570 from Staphylococcus aureus (strain MSSA476).